A 249-amino-acid chain; its full sequence is Glutathione S-transferase tcpG (249 aa).

The GST N-terminal domain maps to 20–109 (LYVRKAIPAP…YLCDKHDKDG (90 aa)). In terms of domain architecture, GST C-terminal spans 115-249 (NATERAQVTS…TEEEIELHGR (135 aa)).

It belongs to the GST superfamily.

It carries out the reaction RX + glutathione = an S-substituted glutathione + a halide anion + H(+). It functions in the pathway secondary metabolite biosynthesis. In terms of biological role, glutathione S-transferase; part of the gene cluster that mediates the biosynthesis of an unusual class of epipolythiodioxopiperazines (ETPs) lacking the reactive thiol group important for toxicity. Firstly, L-tyrosine is prenylated by tcpD, before undergoing condensation with L-glycine in a reaction catalyzed by the NRPS tcpP leading to the diketopiperazine (DKP) backbone. Afterwards the alpha-carbon of tyrosine is oxidized by the cytochrome P450 tcpC to form a hydroxyl group. However, in contrast other ETP biosynthesis pathways studied so far, tcpC is not able to bishydroxylate the DKP at both alpha-carbon positions, but hydroxylates the alpha-carbon of the tyrosine part and the nitrogen of the glycine part. The next steps involve an alpha,beta-elimination reaction catalyzed by tcpI, a methylation by the methyltransferase tcpN the action of the four enzyme cascade tcpG/K/J/I. Due to a dysfunctional cytochrome P450 monooxygenase tcpC, the pathway leads to the biosynthesis of probable non-toxic metabolites lacking the reactive thiol group. This chain is Glutathione S-transferase tcpG, found in Claviceps purpurea (strain 20.1) (Ergot fungus).